A 365-amino-acid chain; its full sequence is MSLQSIKYNRGSLEILDQLLLPVQSKYVAVRGVEDGWKVINKMQVRGAPAIAIVGCLSLAVEIYPEEFESKKSLRQEIEGKLNYLVSARPTAVNMKIAADELLSLANDLTKAEDVSVPDMKQRFLNATEAMLQKDIADNRAIGANGAQAILKRVATTLGAAGTSGNGSVRVLTHCNTGSLATAGYGTALGVIRNLHELGKLEHVYCTETRPYNQGARLTAYELVHEKFPATLVLDSMVAALLRAKNVAAVVVGADRVAANGDTANKIGTYQIAVVAKHHGVPFYVAAPLTSIDLQIPSGDHIIIEERPDREMTHVGEHRIAAPGINCWNPAFDVTPASLITGIITERGVFEPQELKEAITKLLGL.

D255 serves as the catalytic Proton donor.

The protein belongs to the eIF-2B alpha/beta/delta subunits family. MtnA subfamily.

It localises to the cytoplasm. Its subcellular location is the nucleus. The catalysed reaction is 5-(methylsulfanyl)-alpha-D-ribose 1-phosphate = 5-(methylsulfanyl)-D-ribulose 1-phosphate. Its pathway is amino-acid biosynthesis; L-methionine biosynthesis via salvage pathway; L-methionine from S-methyl-5-thio-alpha-D-ribose 1-phosphate: step 1/6. Catalyzes the interconversion of methylthioribose-1-phosphate (MTR-1-P) into methylthioribulose-1-phosphate (MTRu-1-P). This Drosophila willistoni (Fruit fly) protein is Methylthioribose-1-phosphate isomerase.